The sequence spans 121 residues: Piercer of microtubule wall 2 protein (121 aa).

Over residues 1–10 (MTDRNRDKKS) the composition is skewed to basic and acidic residues. A disordered region spans residues 1–29 (MTDRNRDKKSTSPSNSDTEMKSEQLPPCV).

It belongs to the PIERCE2 family. As to quaternary structure, microtubule inner protein component of sperm flagellar doublet microtubules. Interacts with CFAP53, ODAD1 and ODAD3; the interactions link the outer dynein arms docking complex (ODA-DC) to the internal microtubule inner proteins (MIP) in cilium axoneme. In terms of tissue distribution, expressed in airway epithelial cells.

It localises to the cytoplasm. The protein localises to the cytoskeleton. Its subcellular location is the cilium axoneme. The protein resides in the flagellum axoneme. In terms of biological role, microtubule inner protein involved in the attachment of outer dynein arms (ODAs) to dynein-decorated doublet microtubules (DMTs) in cilia axoneme, which is required for motile cilia beating. The sequence is that of Piercer of microtubule wall 2 protein from Homo sapiens (Human).